Consider the following 98-residue polypeptide: Small ribosomal subunit protein uS19 (98 aa).

The segment at F74–K98 is disordered.

The protein belongs to the universal ribosomal protein uS19 family.

Protein S19 forms a complex with S13 that binds strongly to the 16S ribosomal RNA. The sequence is that of Small ribosomal subunit protein uS19 from Chlorobium chlorochromatii (strain CaD3).